Consider the following 423-residue polypeptide: p-aminobenzoyl-glutamate hydrolase subunit A homolog (423 aa).

The protein belongs to the peptidase M20 family. The cofactor is Mn(2+).

In terms of biological role, catalyzes the cleavage of p-aminobenzoyl-glutamate (PABA-GLU) to form p-aminobenzoate (PABA) and glutamate. This Haemophilus influenzae (strain ATCC 51907 / DSM 11121 / KW20 / Rd) protein is p-aminobenzoyl-glutamate hydrolase subunit A homolog (abgA).